Consider the following 136-residue polypeptide: uncharacterized protein (136 aa).

This is an uncharacterized protein from Frog virus 3 (isolate Goorha) (FV-3).